A 228-amino-acid polypeptide reads, in one-letter code: Probable septum site-determining protein MinC (228 aa).

The protein belongs to the MinC family. As to quaternary structure, interacts with MinD and FtsZ.

In terms of biological role, cell division inhibitor that blocks the formation of polar Z ring septums. Rapidly oscillates between the poles of the cell to destabilize FtsZ filaments that have formed before they mature into polar Z rings. Prevents FtsZ polymerization. The chain is Probable septum site-determining protein MinC from Yersinia enterocolitica serotype O:8 / biotype 1B (strain NCTC 13174 / 8081).